The following is a 417-amino-acid chain: MKFTNLTAKEFSDFTDRMTYSHFTQMEGNYELKVAEGTESHLVGIKNNDNEVIAACLLTAVPVMKIFKYFYSNRGPVIDYNNKELVHFFFNELSKYVKKYNCLYLRVDPYLPYQYLNHEGEITGNAGHDWIFDELESLGYKHEGFHKGFDPVLQIRYHSVLNLANKSANDVLKNMDGLRKRNTKKVKKNGVKVRFLSEEELPIFRSFMEDTSETKDFADREDSFYYNRFKHYKDRVLVPLAYINFDEYIEELNNERNVLNKDYNKALKDIEKRPENKKAHNKKENLEQQLDANQQKINEAKNLKQEHGNELPISAGFFIINPFEVVYYAGGTSNRYRHFAGSYAVQWKMINYAIEHGINRYNFYGISGDFSEDAEDAGVVKFKKGYDADVIEYVGDFIKPINKPMYNIYRTLKKLKK.

Belongs to the FemABX family.

The protein localises to the cytoplasm. It carries out the reaction beta-D-GlcNAc-(1-&gt;4)-Mur2Ac(oyl-L-Ala-D-isoglutaminyl-L-Lys-(N(6)-Gly)-D-Ala-D-Ala)-di-trans,octa-cis-undecaprenyl diphosphate + 2 glycyl-tRNA(Gly) = MurNAc-L-Ala-D-isoglutaminyl-L-Lys-(N(6)-tri-Gly)-D-Ala-D-Ala-diphospho-di-trans,octa-cis-undecaprenyl-GlcNAc + 2 tRNA(Gly) + 2 H(+). Catalyzes the incorporation of amino acid(s) into the interchain peptide bridge of peptidoglycan, using aminoacyl-tRNA as amino acid donor. The polypeptide is Aminoacyltransferase FemA (femA) (Staphylococcus epidermidis (strain ATCC 35984 / DSM 28319 / BCRC 17069 / CCUG 31568 / BM 3577 / RP62A)).